The primary structure comprises 417 residues: Queuine tRNA-ribosyltransferase accessory subunit 2 (417 aa).

C324, C326, C329, and H355 together coordinate Zn(2+).

It belongs to the queuine tRNA-ribosyltransferase family. QTRT2 subfamily. Heterodimer of a catalytic subunit and an accessory subunit. The cofactor is Zn(2+).

It localises to the cytoplasm. Functionally, non-catalytic subunit of the queuine tRNA-ribosyltransferase (TGT) that catalyzes the base-exchange of a guanine (G) residue with queuine (Q) at position 34 (anticodon wobble position) in tRNAs with GU(N) anticodons (tRNA-Asp, -Asn, -His and -Tyr), resulting in the hypermodified nucleoside queuosine (7-(((4,5-cis-dihydroxy-2-cyclopenten-1-yl)amino)methyl)-7-deazaguanosine). The sequence is that of Queuine tRNA-ribosyltransferase accessory subunit 2 from Drosophila virilis (Fruit fly).